Reading from the N-terminus, the 360-residue chain is Protein Wnt-2 (360 aa).

An N-terminal signal peptide occupies residues 1 to 25 (MNAPVGGIWLWLPLLLTWLSPEVSS). Cystine bridges form between Cys76–Cys87, Cys127–Cys135, Cys137–Cys157, Cys206–Cys220, Cys208–Cys215, Cys278–Cys309, Cys294–Cys304, Cys308–Cys348, Cys324–Cys339, Cys326–Cys336, and Cys331–Cys332. Ser212 is lipidated: O-palmitoleoyl serine; by PORCN. Residue Asn295 is glycosylated (N-linked (GlcNAc...) asparagine).

It belongs to the Wnt family. Palmitoleoylation is required for efficient binding to frizzled receptors. Depalmitoleoylation leads to Wnt signaling pathway inhibition.

It is found in the secreted. The protein localises to the extracellular space. It localises to the extracellular matrix. In terms of biological role, ligand for members of the frizzled family of seven transmembrane receptors. Probable developmental protein. May be a signaling molecule which affects the development of discrete regions of tissues. Is likely to signal over only few cell diameters. This is Protein Wnt-2 (WNT2) from Rhinolophus ferrumequinum (Greater horseshoe bat).